Here is a 165-residue protein sequence, read N- to C-terminus: Urease accessory protein UreE (165 aa).

Residues 137–156 form a disordered region; that stretch reads EAGAYQSAPHGHSHAHGHDH.

It belongs to the UreE family.

It localises to the cytoplasm. Its function is as follows. Involved in urease metallocenter assembly. Binds nickel. Probably functions as a nickel donor during metallocenter assembly. The polypeptide is Urease accessory protein UreE (Pseudomonas putida (strain GB-1)).